We begin with the raw amino-acid sequence, 143 residues long: Nucleoside diphosphate kinase (143 aa).

The ATP site is built by Lys-11, Phe-59, Arg-87, Thr-93, Arg-104, and Asn-114. His-117 acts as the Pros-phosphohistidine intermediate in catalysis.

Belongs to the NDK family. In terms of assembly, homotetramer. Requires Mg(2+) as cofactor.

The protein resides in the cytoplasm. The enzyme catalyses a 2'-deoxyribonucleoside 5'-diphosphate + ATP = a 2'-deoxyribonucleoside 5'-triphosphate + ADP. It catalyses the reaction a ribonucleoside 5'-diphosphate + ATP = a ribonucleoside 5'-triphosphate + ADP. Its function is as follows. Major role in the synthesis of nucleoside triphosphates other than ATP. The ATP gamma phosphate is transferred to the NDP beta phosphate via a ping-pong mechanism, using a phosphorylated active-site intermediate. This is Nucleoside diphosphate kinase from Shewanella pealeana (strain ATCC 700345 / ANG-SQ1).